The chain runs to 72 residues: Seed trypsin/chymotrypsin inhibitor IVB (72 aa).

7 cysteine pairs are disulfide-bonded: Cys-8/Cys-61, Cys-9/Cys-24, Cys-12/Cys-57, Cys-14/Cys-22, Cys-31/Cys-38, Cys-35/Cys-50, and Cys-40/Cys-48.

This sequence belongs to the Bowman-Birk serine protease inhibitor family. As to expression, seed.

Inhibitor of trypsin and of chymotrypsin. May function as a natural phytochemical defense against predators. The chain is Seed trypsin/chymotrypsin inhibitor IVB from Pisum sativum (Garden pea).